A 628-amino-acid chain; its full sequence is Probable potassium transport system protein Kup (628 aa).

Transmembrane regions (helical) follow at residues 15–35, 49–69, 106–126, 141–161, 174–194, 210–230, 254–274, 295–315, 343–363, 369–389, 398–418, and 425–445; these read FAAE…SPLY, FLGG…ILSV, WYLL…GVLT, ISPE…LAVF, FFGP…VYGI, IMLM…CFLA, LFVA…ILLV, LLFL…TGVF, IYVG…VLGF, LASA…ILFI, WPAP…FAFA, and IHDG…VMVS.

Belongs to the HAK/KUP transporter (TC 2.A.72) family.

It localises to the cell inner membrane. The enzyme catalyses K(+)(in) + H(+)(in) = K(+)(out) + H(+)(out). Transport of potassium into the cell. Likely operates as a K(+):H(+) symporter. The polypeptide is Probable potassium transport system protein Kup (Xanthobacter autotrophicus (strain ATCC BAA-1158 / Py2)).